Here is a 354-residue protein sequence, read N- to C-terminus: MATAAASSLLKSSFAGSRLPAATRTTPASLVVATGPRGAGAGPICASMSMSSSNPPYDLTSFRFSPIKESIVSREMTRRYMTDMITYADTDVVIVGAGSAGLSCAYELSKDPAVSIAIVEQSVSPGGGAWLGGQLFSAMVVRKPAHLFLDELGVAYDEAEDYVVIKHAALFTSTVMSLLLARPNVKLFNAVAVEDLIVRGGRVGGVVTNWALVSMNHDTQSCMDPNVMEAKVVVSSCGHDGPFGATGVKRLQDIGMISAVPGMKALDMNTAEDEIVRLTREVVPGMIVTGMEVAEIDGAPRMGPTFGAMMISGQKAAHLALKALGRPNAVDGTMSPPLREELMIAYKDDEVVDA.

The transit peptide at 1 to 45 directs the protein to the chloroplast; that stretch reads MATAAASSLLKSSFAGSRLPAATRTTPASLVVATGPRGAGAGPIC. Residues alanine 100, 120 to 121, glycine 128, and valine 193 each bind substrate; that span reads EQ. The residue at position 222 (cysteine 222) is a 2,3-didehydroalanine (Cys). Substrate-binding positions include aspartate 224, histidine 239, methionine 291, and 301–303; that span reads RMG.

Belongs to the THI4 family. As to quaternary structure, homooctamer. Requires Fe cation as cofactor. Post-translationally, during the catalytic reaction, a sulfide is transferred from Cys-222 to a reaction intermediate, generating a dehydroalanine residue. As to expression, highest expression in developing embryos and green leaves and a very low level expression seen in endosperm, roots, etiolated shoots and immature ears.

It localises to the plastid. The protein resides in the chloroplast. The enzyme catalyses [ADP-thiazole synthase]-L-cysteine + glycine + NAD(+) = [ADP-thiazole synthase]-dehydroalanine + ADP-5-ethyl-4-methylthiazole-2-carboxylate + nicotinamide + 3 H2O + 2 H(+). In terms of biological role, involved in biosynthesis of the thiamine precursor thiazole. Catalyzes the conversion of NAD and glycine to adenosine diphosphate 5-(2-hydroxyethyl)-4-methylthiazole-2-carboxylic acid (ADT), an adenylated thiazole intermediate. The reaction includes an iron-dependent sulfide transfer from a conserved cysteine residue of the protein to a thiazole intermediate. The enzyme can only undergo a single turnover, which suggests it is a suicide enzyme. May have additional roles in adaptation to various stress conditions and in DNA damage tolerance. This is Thiamine thiazole synthase 1, chloroplastic from Zea mays (Maize).